A 177-amino-acid polypeptide reads, in one-letter code: Large ribosomal subunit protein uL6 (177 aa).

Residues 156–171 (PYKGKGVRYDTETIRR) show a composition bias toward basic and acidic residues. Residues 156–177 (PYKGKGVRYDTETIRRKEGKKK) are disordered.

This sequence belongs to the universal ribosomal protein uL6 family. In terms of assembly, part of the 50S ribosomal subunit.

Its function is as follows. This protein binds to the 23S rRNA, and is important in its secondary structure. It is located near the subunit interface in the base of the L7/L12 stalk, and near the tRNA binding site of the peptidyltransferase center. The sequence is that of Large ribosomal subunit protein uL6 from Gluconacetobacter diazotrophicus (strain ATCC 49037 / DSM 5601 / CCUG 37298 / CIP 103539 / LMG 7603 / PAl5).